We begin with the raw amino-acid sequence, 260 residues long: Malonyl-[acyl-carrier protein] O-methyltransferase (260 aa).

It belongs to the methyltransferase superfamily.

It carries out the reaction malonyl-[ACP] + S-adenosyl-L-methionine = malonyl-[ACP] methyl ester + S-adenosyl-L-homocysteine. Its pathway is cofactor biosynthesis; biotin biosynthesis. Converts the free carboxyl group of a malonyl-thioester to its methyl ester by transfer of a methyl group from S-adenosyl-L-methionine (SAM). It allows to synthesize pimeloyl-ACP via the fatty acid synthetic pathway. This is Malonyl-[acyl-carrier protein] O-methyltransferase from Herminiimonas arsenicoxydans.